A 237-amino-acid polypeptide reads, in one-letter code: MSNAYKRVLLKLSGEALMGDDAFGINRATIERMVADIAEVVRLGTQLAVVIGGGNIFRGVAGGAAGMDRATADYMGMLATMMNALALQDAMRHAGIEARVQSALRMDQVVEPYIRPRAIRQLEEGRVVIFAAGTGNPFFTTDTAAALRGSEVGAEVVLKATKVDGVYSADPKKDPSATRYTTITFDEAISRNLQVMDATAFALCRDQKLPIRVFSINKPGALKRIVLGEDEGTLVHV.

11–14 (KLSG) contacts ATP. Gly53 is a binding site for UMP. 2 residues coordinate ATP: Gly54 and Arg58. UMP-binding positions include Asp73 and 134-141 (TGNPFFTT). Residues Thr161, Tyr167, and Asp170 each contribute to the ATP site.

The protein belongs to the UMP kinase family. As to quaternary structure, homohexamer.

The protein localises to the cytoplasm. It carries out the reaction UMP + ATP = UDP + ADP. The protein operates within pyrimidine metabolism; CTP biosynthesis via de novo pathway; UDP from UMP (UMPK route): step 1/1. Inhibited by UTP. In terms of biological role, catalyzes the reversible phosphorylation of UMP to UDP. This Burkholderia lata (strain ATCC 17760 / DSM 23089 / LMG 22485 / NCIMB 9086 / R18194 / 383) protein is Uridylate kinase.